Reading from the N-terminus, the 93-residue chain is Large ribosomal subunit protein uL23cz/uL23cy (93 aa).

Belongs to the universal ribosomal protein uL23 family. Part of the 50S ribosomal subunit.

The protein resides in the plastid. The protein localises to the chloroplast. Functionally, binds to 23S rRNA. The protein is Large ribosomal subunit protein uL23cz/uL23cy (rpl23-A) of Acorus calamus (Sweet flag).